The primary structure comprises 527 residues: Matrix metalloproteinase-19 (527 aa).

The N-terminal stretch at 1-18 (MDWQQLWLAFLLPMTVSG) is a signal peptide. Residues 19 to 98 (RALGPTEKEA…EDPFNQKSLK (80 aa)) constitute a propeptide that is removed on maturation. A Cysteine switch motif is present at residues 84–91 (PRCGLEDP). C86 serves as a coordination point for Zn(2+). N109 carries N-linked (GlcNAc...) asparagine glycosylation. H213 is a Zn(2+) binding site. Residue E214 is part of the active site. 2 residues coordinate Zn(2+): H217 and H223. Hemopexin repeat units lie at residues 286-333 (PNPC…WEGL), 334-372 (PGNL…FPMK), 377-425 (EPNL…FTGV), and 426-471 (PDRP…WMHC). A disulfide bridge links C289 with C471. 2 N-linked (GlcNAc...) asparagine glycosylation sites follow: N464 and N479. Residues 473 to 500 (SQTPDTNSSTGDVTPSTTDTVLGTTPST) are disordered. The GPI-anchor amidated aspartate moiety is linked to residue D512. Positions 513–527 (SASLSFSANVTLLGA) are cleaved as a propeptide — removed in mature form. N521 is a glycosylation site (N-linked (GlcNAc...) asparagine).

This sequence belongs to the peptidase M10A family. It depends on Zn(2+) as a cofactor. Ca(2+) is required as a cofactor. Activated by autolytic cleavage after Lys-98. Post-translationally, tyrosine phosphorylated by PKDCC/VLK. As to expression, highly expressed in the liver. Expressed in the arterial tunica media of large blood vessels.

The protein resides in the cell membrane. The protein localises to the secreted. Its subcellular location is the extracellular space. It is found in the extracellular matrix. Its function is as follows. Endopeptidase that degrades various components of the extracellular matrix, such as aggrecan and cartilage oligomeric matrix protein (comp), during development, haemostasis and pathological conditions (arthritic disease). May also play a role in neovascularization or angiogenesis. Hydrolyzes collagen type IV, laminin, nidogen, nascin-C isoform, fibronectin, and type I gelatin. The protein is Matrix metalloproteinase-19 (Mmp19) of Mus musculus (Mouse).